A 343-amino-acid chain; its full sequence is L-threonine 3-dehydrogenase (343 aa).

Cys-38 contributes to the Zn(2+) binding site. Active-site charge relay system residues include Thr-40 and His-43. Zn(2+)-binding residues include His-63, Glu-64, Cys-93, Cys-96, Cys-99, and Cys-107. Residues Ile-175, Asp-195, Arg-200, 262-264, and 286-287 contribute to the NAD(+) site; these read LGI and IY.

Belongs to the zinc-containing alcohol dehydrogenase family. In terms of assembly, homotetramer. It depends on Zn(2+) as a cofactor.

It is found in the cytoplasm. It carries out the reaction L-threonine + NAD(+) = (2S)-2-amino-3-oxobutanoate + NADH + H(+). It participates in amino-acid degradation; L-threonine degradation via oxydo-reductase pathway; glycine from L-threonine: step 1/2. In terms of biological role, catalyzes the NAD(+)-dependent oxidation of L-threonine to 2-amino-3-ketobutyrate. The chain is L-threonine 3-dehydrogenase from Burkholderia mallei (strain NCTC 10247).